Reading from the N-terminus, the 36-residue chain is Pancreatic polypeptide (36 aa).

Position 36 is a phenylalanine amide (phenylalanine 36).

Belongs to the NPY family.

Its subcellular location is the secreted. In terms of biological role, hormone secreted by pancreatic cells that acts as a regulator of pancreatic and gastrointestinal functions. In Alligator mississippiensis (American alligator), this protein is Pancreatic polypeptide (ppy).